Consider the following 321-residue polypeptide: Sex-lethal homolog (321 aa).

RRM domains lie at 78–156 and 164–244; these read TNLI…FARP and TNLY…VAEE.

As to expression, expressed in gonads and somatic tissues of both sexes. In the ovary, expressed in the last egg chamber of each ovariole. Highly expressed in nurse cells with low expression found in oocytes. Highly expressed in testis with lower expression in testis sheath and vas deferentia.

Its subcellular location is the nucleus. Functionally, unknown; apparently not involved in somatic sex determination. This is Sex-lethal homolog (SXL) from Megaselia scalaris (Humpbacked fly).